A 77-amino-acid chain; its full sequence is Large ribosomal subunit protein uL29 (77 aa).

The protein belongs to the universal ribosomal protein uL29 family.

The chain is Large ribosomal subunit protein uL29 from Mycobacterium avium (strain 104).